Here is a 124-residue protein sequence, read N- to C-terminus: MNLIAQLEAEQIAALGKTIPDFKAGDTVRVGYKVTEGTRSRVQNYEGVVIGRKGGNTISASFTVRKISFGEGVERVFPLYSTNIDSIEVVRRGRVRRAKLYYLRSRRGKSARIAEVTNYKEKSE.

This sequence belongs to the bacterial ribosomal protein bL19 family.

Its function is as follows. This protein is located at the 30S-50S ribosomal subunit interface and may play a role in the structure and function of the aminoacyl-tRNA binding site. The protein is Large ribosomal subunit protein bL19 of Cereibacter sphaeroides (strain ATCC 17029 / ATH 2.4.9) (Rhodobacter sphaeroides).